Here is a 216-residue protein sequence, read N- to C-terminus: Peptide methionine sulfoxide reductase MsrA (216 aa).

C54 is a catalytic residue.

Belongs to the MsrA Met sulfoxide reductase family.

The enzyme catalyses L-methionyl-[protein] + [thioredoxin]-disulfide + H2O = L-methionyl-(S)-S-oxide-[protein] + [thioredoxin]-dithiol. It carries out the reaction [thioredoxin]-disulfide + L-methionine + H2O = L-methionine (S)-S-oxide + [thioredoxin]-dithiol. Has an important function as a repair enzyme for proteins that have been inactivated by oxidation. Catalyzes the reversible oxidation-reduction of methionine sulfoxide in proteins to methionine. In Xanthomonas oryzae pv. oryzae (strain PXO99A), this protein is Peptide methionine sulfoxide reductase MsrA.